Here is a 137-residue protein sequence, read N- to C-terminus: MPTIQQLVRKGREQLVFKSKSPALDSCPQRRGVCTRVYTTTPKKPNSAMRKVARVRLTNSKEVNAYIPGEGHNLQEHSIVLIRGGRVKDLPGVRYHIVRGALDTAGVNGRKQSRSKYGAKRPKPGQAAAAPAKGKKK.

The residue at position 89 (Asp89) is a 3-methylthioaspartic acid. A disordered region spans residues 104–137 (TAGVNGRKQSRSKYGAKRPKPGQAAAAPAKGKKK). Over residues 111–123 (KQSRSKYGAKRPK) the composition is skewed to basic residues. A compositionally biased stretch (low complexity) spans 124-137 (PGQAAAAPAKGKKK).

It belongs to the universal ribosomal protein uS12 family. In terms of assembly, part of the 30S ribosomal subunit. Contacts proteins S8 and S17. May interact with IF1 in the 30S initiation complex.

Functionally, with S4 and S5 plays an important role in translational accuracy. Its function is as follows. Interacts with and stabilizes bases of the 16S rRNA that are involved in tRNA selection in the A site and with the mRNA backbone. Located at the interface of the 30S and 50S subunits, it traverses the body of the 30S subunit contacting proteins on the other side and probably holding the rRNA structure together. The combined cluster of proteins S8, S12 and S17 appears to hold together the shoulder and platform of the 30S subunit. The chain is Small ribosomal subunit protein uS12 from Cytophaga hutchinsonii (strain ATCC 33406 / DSM 1761 / CIP 103989 / NBRC 15051 / NCIMB 9469 / D465).